The chain runs to 617 residues: Probable endochitinase (617 aa).

In terms of domain architecture, GH18 spans 53–426 (YIRPCYFTNW…SVIAKELGGV (374 aa)). A disulfide bridge connects residues Cys-57 and Cys-82. Chitin contacts are provided by residues 109 to 110 (DW) and 136 to 139 (GGWS). Glu-179 (proton donor) is an active-site residue. Residues Tyr-180 and 245–248 (MSYD) contribute to the chitin site. Asn-310 carries an N-linked (GlcNAc...) asparagine glycan. Position 394 (Trp-394) interacts with chitin. Chitin-binding type-2 domains are found at residues 478-534 (TNVC…GCSV) and 563-617 (AFKC…KCAK). Intrachain disulfides connect Cys-511–Cys-524 and Cys-594–Cys-607.

It belongs to the glycosyl hydrolase 18 family. Chitinase class II subfamily.

It carries out the reaction Random endo-hydrolysis of N-acetyl-beta-D-glucosaminide (1-&gt;4)-beta-linkages in chitin and chitodextrins.. This chain is Probable endochitinase (cht-1), found in Caenorhabditis elegans.